A 104-amino-acid polypeptide reads, in one-letter code: Cytochrome c6 (104 aa).

An N-terminal signal peptide occupies residues 1–20 (MKSLLTFILTTIFCIQQVWA). Heme c contacts are provided by Cys34, Cys37, His38, and Met78.

This sequence belongs to the cytochrome c family. PetJ subfamily. As to quaternary structure, monomer. In terms of processing, binds 1 heme c group covalently per subunit.

It is found in the plastid. It localises to the chloroplast thylakoid lumen. Functions as an electron carrier between membrane-bound cytochrome b6-f and photosystem I in oxygenic photosynthesis. The chain is Cytochrome c6 from Cyanidioschyzon merolae (strain NIES-3377 / 10D) (Unicellular red alga).